The following is a 266-amino-acid chain: Putative carbamate hydrolase RutD (266 aa).

It belongs to the AB hydrolase superfamily. Hydrolase RutD family.

It carries out the reaction carbamate + 2 H(+) = NH4(+) + CO2. Involved in pyrimidine catabolism. May facilitate the hydrolysis of carbamate, a reaction that can also occur spontaneously. This Escherichia coli O150:H5 (strain SE15) protein is Putative carbamate hydrolase RutD.